Reading from the N-terminus, the 443-residue chain is Xaa-Pro dipeptidase (443 aa).

Residues D246, D257, H339, E384, and E423 each coordinate Mn(2+).

The protein belongs to the peptidase M24B family. Bacterial-type prolidase subfamily. Requires Mn(2+) as cofactor.

It carries out the reaction Xaa-L-Pro dipeptide + H2O = an L-alpha-amino acid + L-proline. Its function is as follows. Splits dipeptides with a prolyl residue in the C-terminal position. The protein is Xaa-Pro dipeptidase of Escherichia coli O8 (strain IAI1).